The following is a 173-amino-acid chain: DASH complex subunit SPC19 (173 aa).

Belongs to the DASH complex SPC19 family. As to quaternary structure, component of the DASH complex consisting of ASK1, DAD1, DAD2, DAD3, DAD4, DAM1, DUO1, HSK3, SPC19 and SPC34, with a stoichiometry of one copy of each subunit per complex. Multiple DASH complexes oligomerize to form a ring that encircles spindle microtubules and organizes the rod-like NDC80 complexes of the outer kinetochore. DASH complex oligomerization strengthens microtubule attachments. On cytoplasmic microtubules, DASH complexes appear to form patches instead of rings.

The protein resides in the nucleus. It localises to the cytoplasm. Its subcellular location is the cytoskeleton. The protein localises to the spindle. It is found in the chromosome. The protein resides in the centromere. It localises to the kinetochore. Component of the DASH complex that connects microtubules with kinetochores and couples microtubule depolymerisation to chromosome movement; it is involved in retrieving kinetochores to the spindle poles before their re-orientation on the spindle in early mitosis and allows microtubule depolymerization to pull chromosomes apart and resist detachment during anaphase. Kinetochores, consisting of a centromere-associated inner segment and a microtubule-contacting outer segment, play a crucial role in chromosome segregation by mediating the physical connection between centromeric DNA and microtubules. Kinetochores also serve as an input point for the spindle assembly checkpoint, which delays anaphase until all chromosomes have bioriented on the mitotic spindle. In Chaetomium thermophilum (strain DSM 1495 / CBS 144.50 / IMI 039719) (Thermochaetoides thermophila), this protein is DASH complex subunit SPC19.